The chain runs to 188 residues: Abscisic acid receptor PYL8 (188 aa).

The segment at 25–176 (HELVDNQCSS…NLKSLADISE (152 aa)) is START-like. The cysteines at positions 32 and 157 are disulfide-linked. Lys61 contributes to the abscisate binding site. Thr77 bears the Phosphothreonine; by CARK1 mark. A Gate loop motif is present at residues 85–89 (SGLPA). Residues 89–94 (ATRSTE), 116–122 (RLKNYSS), and Glu141 each bind abscisate. The short motif at 115 to 117 (HRL) is the Latch loop element.

Belongs to the PYR/PYL/RCAR abscisic acid intracellular receptor family. In terms of assembly, monomer. Homodimer. Binds ABA on one subunit only. interacts with ABI1 and HAB1, and possibly with other PP2Cs. Binds to CARs protein in an ABA-independent manner, both at the plasma membrane and in the nucleus. Interacts directly with CAR1 and CAR4. Interacts with MYB44, MYB73 and MYB77 in an ABA-independent manner. Interacts with DDA1. Interacts with CARK1 in the cytosol. Binds to ABI1 when phosphorylated by CARK1. Interacts with AIP1 in the nucleus. In terms of processing, phosphorylated by CARK1 especially in response to abscisic acid (ABA); this phosphorylation promotes its stability and inhibitory ability to ABI1. Post-translationally, ubiquitinated in DDA1- and CDD complex-dependent manner. Ubiquitination leads to its subsequent proteasomal degradation.

The protein resides in the cytoplasm. It localises to the cytosol. It is found in the nucleus. The protein localises to the cell membrane. In terms of biological role, receptor for abscisic acid (ABA) required for ABA-mediated responses such as stomatal closure and germination inhibition. Inhibits the activity of group-A protein phosphatases type 2C (PP2Cs) in an ABA-independent manner but more efficiently when activated by ABA. Confers enhanced sensitivity to ABA. Can be activated by both (-)-ABA and (+)-ABA. Mediates crosstalk between ABA and auxin signaling to regulate lateral root growth. Required for lateral root growth suppression by ABA. In response to auxin, promotes lateral root growth by enhancing MYB77-dependent transcription of the auxin-responsive gene IAA19. Enhances the abilities of MYB44 and MYB73 to activate IAA19 gene. This is Abscisic acid receptor PYL8 from Arabidopsis thaliana (Mouse-ear cress).